The chain runs to 632 residues: 1-deoxy-D-xylulose-5-phosphate synthase (632 aa).

Residues H75 and G117–A119 each bind thiamine diphosphate. Mg(2+) is bound at residue D146. Thiamine diphosphate contacts are provided by residues A147–A148, N175, and E370. Residue N175 participates in Mg(2+) binding.

It belongs to the transketolase family. DXPS subfamily. In terms of assembly, homodimer. It depends on Mg(2+) as a cofactor. The cofactor is thiamine diphosphate.

The enzyme catalyses D-glyceraldehyde 3-phosphate + pyruvate + H(+) = 1-deoxy-D-xylulose 5-phosphate + CO2. It participates in metabolic intermediate biosynthesis; 1-deoxy-D-xylulose 5-phosphate biosynthesis; 1-deoxy-D-xylulose 5-phosphate from D-glyceraldehyde 3-phosphate and pyruvate: step 1/1. Its function is as follows. Catalyzes the acyloin condensation reaction between C atoms 2 and 3 of pyruvate and glyceraldehyde 3-phosphate to yield 1-deoxy-D-xylulose-5-phosphate (DXP). The protein is 1-deoxy-D-xylulose-5-phosphate synthase of Chlamydia muridarum (strain MoPn / Nigg).